The primary structure comprises 1368 residues: DNA-directed RNA polymerase subunit beta (1368 aa).

Belongs to the RNA polymerase beta chain family. In terms of assembly, the RNAP catalytic core consists of 2 alpha, 1 beta, 1 beta' and 1 omega subunit. When a sigma factor is associated with the core the holoenzyme is formed, which can initiate transcription.

It carries out the reaction RNA(n) + a ribonucleoside 5'-triphosphate = RNA(n+1) + diphosphate. Its function is as follows. DNA-dependent RNA polymerase catalyzes the transcription of DNA into RNA using the four ribonucleoside triphosphates as substrates. The protein is DNA-directed RNA polymerase subunit beta of Desulfosudis oleivorans (strain DSM 6200 / JCM 39069 / Hxd3) (Desulfococcus oleovorans).